A 179-amino-acid chain; its full sequence is Ribulose bisphosphate carboxylase small subunit, chloroplastic 5 (179 aa).

The transit peptide at 1–58 (MASSATMLSSVATAACAAPAQASMVAPFVGLKSASAFPVTQKTATGLSTLPSNGGRVQ) directs the protein to the chloroplast.

The protein belongs to the RuBisCO small chain family. As to quaternary structure, heterohexadecamer of 8 large and 8 small subunits.

It localises to the plastid. The protein localises to the chloroplast. In terms of biological role, ruBisCO catalyzes two reactions: the carboxylation of D-ribulose 1,5-bisphosphate, the primary event in carbon dioxide fixation, as well as the oxidative fragmentation of the pentose substrate. Both reactions occur simultaneously and in competition at the same active site. Although the small subunit is not catalytic it is essential for maximal activity. This Fritillaria agrestis (Stinkbells) protein is Ribulose bisphosphate carboxylase small subunit, chloroplastic 5.